Consider the following 403-residue polypeptide: Riboflavin biosynthesis protein RibBA (403 aa).

Positions 1-204 are DHBP synthase; sequence MKNKVFASIG…IGELVNYRRR (204 aa). Residues 30 to 31, Asp35, 143 to 147, and Glu167 contribute to the D-ribulose 5-phosphate site; these read RE and RTGHT. Mg(2+) is bound at residue Glu31. Mg(2+) is bound at residue His146. The tract at residues 205 to 403 is GTP cyclohydrolase II; sequence TEKFISEIVN…EKMGHMLKKV (199 aa). GTP is bound at residue 255–259; sequence RVHSS. Residues Cys260, Cys271, and Cys273 each contribute to the Zn(2+) site. GTP is bound by residues Gln276, 298 to 300, and Thr320; that span reads EGR. The Proton acceptor; for GTP cyclohydrolase activity role is filled by Asp332. Arg334 acts as the Nucleophile; for GTP cyclohydrolase activity in catalysis. GTP-binding residues include Thr355 and Lys360.

The protein in the N-terminal section; belongs to the DHBP synthase family. It in the C-terminal section; belongs to the GTP cyclohydrolase II family. It depends on Mg(2+) as a cofactor. Mn(2+) serves as cofactor. Requires Zn(2+) as cofactor.

The catalysed reaction is D-ribulose 5-phosphate = (2S)-2-hydroxy-3-oxobutyl phosphate + formate + H(+). It catalyses the reaction GTP + 4 H2O = 2,5-diamino-6-hydroxy-4-(5-phosphoribosylamino)-pyrimidine + formate + 2 phosphate + 3 H(+). It functions in the pathway cofactor biosynthesis; riboflavin biosynthesis; 2-hydroxy-3-oxobutyl phosphate from D-ribulose 5-phosphate: step 1/1. The protein operates within cofactor biosynthesis; riboflavin biosynthesis; 5-amino-6-(D-ribitylamino)uracil from GTP: step 1/4. Catalyzes the conversion of D-ribulose 5-phosphate to formate and 3,4-dihydroxy-2-butanone 4-phosphate. Functionally, catalyzes the conversion of GTP to 2,5-diamino-6-ribosylamino-4(3H)-pyrimidinone 5'-phosphate (DARP), formate and pyrophosphate. The chain is Riboflavin biosynthesis protein RibBA from Endomicrobium trichonymphae.